The chain runs to 84 residues: Small ribosomal subunit protein uS17 (84 aa).

This sequence belongs to the universal ribosomal protein uS17 family. In terms of assembly, part of the 30S ribosomal subunit.

One of the primary rRNA binding proteins, it binds specifically to the 5'-end of 16S ribosomal RNA. This chain is Small ribosomal subunit protein uS17, found in Clostridium acetobutylicum (strain ATCC 824 / DSM 792 / JCM 1419 / IAM 19013 / LMG 5710 / NBRC 13948 / NRRL B-527 / VKM B-1787 / 2291 / W).